Reading from the N-terminus, the 565-residue chain is Zinc finger protein 512 (565 aa).

The interval 1–30 (MSSRLGAVPATSGPTTFKQQRSTRIVGAKN) is disordered. A compositionally biased stretch (polar residues) spans 12-23 (SGPTTFKQQRST). Residues K18 and K83 each participate in a glycyl lysine isopeptide (Lys-Gly) (interchain with G-Cter in SUMO2) cross-link. Residues 85-147 (AATSHVEGSG…QARRIRKEPP (63 aa)) form a disordered region. Over residues 118 to 129 (KKHKLYGRKQRP) the composition is skewed to basic residues. Residues 196–219 (FTCHHCGKQLRSLAGMKYHVMANH) form a C2H2-type 1 zinc finger. Residue K226 forms a Glycyl lysine isopeptide (Lys-Gly) (interchain with G-Cter in SUMO2) linkage. The C2H2-type 2 zinc finger occupies 286 to 309 (LKCHHCGKPYRSKAGLAYHLRSEH). A Glycyl lysine isopeptide (Lys-Gly) (interchain with G-Cter in SUMO2) cross-link involves residue K332. The C2H2-type 3; atypical zinc finger occupies 405–429 (IQCPNQGCEAVYSSVSGLKAHLGSC). A C2H2-type 4 zinc finger spans residues 439–462 (YKCLLCQKEFVSESGVKYHINSVH). Residues 484–493 (KQRQQEEEKR) show a composition bias toward basic and acidic residues. Residues 484–565 (KQRQQEEEKR…PKTNHKRGRK (82 aa)) are disordered. Residues 494-507 (RQQHRSRRSLRRRQ) are compositionally biased toward basic residues. Basic and acidic residues predominate over residues 522 to 531 (VGKDQRRNEE). A compositionally biased stretch (basic residues) spans 554 to 565 (KPPKTNHKRGRK).

It belongs to the krueppel C2H2-type zinc-finger protein family.

The protein localises to the nucleus. Functionally, may be involved in transcriptional regulation. This is Zinc finger protein 512 (ZNF512) from Macaca fascicularis (Crab-eating macaque).